Consider the following 350-residue polypeptide: Twinfilin-1 (350 aa).

At Ser-2 the chain carries N-acetylserine. The region spanning 2–139 is the ADF-H 1 domain; that stretch reads SHQTGIQASE…SLHGYKKYLL (138 aa). Phosphoserine occurs at positions 143 and 277. The ADF-H 2 domain occupies 175-313; that stretch reads LQGVAFPISR…TADFLYEEVH (139 aa). Position 309 is a phosphotyrosine (Tyr-309). Residues 316-350 form a disordered region; the sequence is QHAHKQSFAKPKGPAGKRGIRRLIRGPAETEATTD. Position 349 is a phosphothreonine (Thr-349).

This sequence belongs to the actin-binding proteins ADF family. Twinfilin subfamily. Interacts with G-actin; ADP-actin form and capping protein (CP). May also be able to interact with TWF2 and phosphoinositides, PI(4,5)P2. When bound to PI(4,5)P2, it is down-regulated. Interacts with ACTG1. Post-translationally, phosphorylated on serine and threonine residues. In terms of tissue distribution, expressed at high levels in the colon, testis, ovary, prostate and lung. Expressed at lower levels in the brain, bladder and heart. Not detected in liver.

It is found in the cytoplasm. It localises to the cytoskeleton. In terms of biological role, actin-binding protein involved in motile and morphological processes. Inhibits actin polymerization, likely by sequestering G-actin. By capping the barbed ends of filaments, it also regulates motility. Seems to play an important role in clathrin-mediated endocytosis and distribution of endocytic organelles. This chain is Twinfilin-1 (TWF1), found in Homo sapiens (Human).